The sequence spans 362 residues: Large ribosomal subunit protein uL3 (362 aa).

The interval 340–362 (RPPKKKPPVQRPQITYVSVESKQ) is disordered. Positions 351-362 (PQITYVSVESKQ) are enriched in polar residues.

It belongs to the universal ribosomal protein uL3 family. Part of the 50S ribosomal subunit. Forms a cluster with proteins L14 and L24e.

One of the primary rRNA binding proteins, it binds directly near the 3'-end of the 23S rRNA, where it nucleates assembly of the 50S subunit. The protein is Large ribosomal subunit protein uL3 of Pyrococcus horikoshii (strain ATCC 700860 / DSM 12428 / JCM 9974 / NBRC 100139 / OT-3).